A 185-amino-acid polypeptide reads, in one-letter code: Urease accessory protein UreE (185 aa).

The disordered stretch occupies residues 153-185; the sequence is LRANSAQGHGHSHSHSHDHHGYHHHGDGHWHKH. The span at 162–175 shows a compositional bias: basic residues; it reads GHSHSHSHDHHGYH. Positions 176–185 are enriched in basic and acidic residues; the sequence is HHGDGHWHKH.

Belongs to the UreE family.

Its subcellular location is the cytoplasm. Functionally, involved in urease metallocenter assembly. Binds nickel. Probably functions as a nickel donor during metallocenter assembly. This is Urease accessory protein UreE from Haemophilus influenzae (strain 86-028NP).